The primary structure comprises 659 residues: Zeaxanthin epoxidase, chloroplastic (659 aa).

Residues Met-1 to Ala-50 constitute a chloroplast transit peptide. FAD-binding positions include Arg-79–Glu-107 and Thr-357–Asp-370. The region spanning Leu-553–Gly-607 is the FHA domain.

Requires FAD as cofactor. As to expression, expressed in young microspores.

It localises to the plastid. It is found in the chloroplast membrane. Its subcellular location is the chloroplast thylakoid membrane. It carries out the reaction all-trans-zeaxanthin + 4 reduced [2Fe-2S]-[ferredoxin] + 2 O2 + 4 H(+) = all-trans-violaxanthin + 4 oxidized [2Fe-2S]-[ferredoxin] + 2 H2O. Its pathway is plant hormone biosynthesis; abscisate biosynthesis. Functionally, zeaxanthin epoxidase that plays an important role in the xanthophyll cycle and abscisic acid (ABA) biosynthesis. Converts zeaxanthin into antheraxanthin and subsequently violaxanthin. Required for resistance to osmotic and drought stresses, seed development and dormancy. This Oryza sativa subsp. japonica (Rice) protein is Zeaxanthin epoxidase, chloroplastic (ZEP).